The sequence spans 495 residues: Protein YhjJ (495 aa).

The signal sequence occupies residues 1-24 (MQGTKIRLLAGSLLMLASAGYVQA).

It belongs to the peptidase M16 family.

The protein resides in the periplasm. This Salmonella typhi protein is Protein YhjJ (yhjJ).